The chain runs to 284 residues: Tropomyosin (284 aa).

The stretch at 1–284 (MDSIKKKMMA…DTTFAELTSF (284 aa)) forms a coiled coil. The segment at 97-140 (EDFEQSSGRLTETSTKLDDASKAAEESERNRKTLETRSISDDER) is disordered. Polar residues predominate over residues 101–110 (QSSGRLTETS). Residues 111-140 (TKLDDASKAAEESERNRKTLETRSISDDER) are compositionally biased toward basic and acidic residues.

This sequence belongs to the tropomyosin family. In terms of assembly, homodimer.

In terms of biological role, tropomyosin, in association with the troponin complex, plays a central role in the calcium dependent regulation of muscle contraction. The protein is Tropomyosin of Echinococcus multilocularis (Fox tapeworm).